Consider the following 278-residue polypeptide: Coiled-coil domain-containing protein 106 (278 aa).

Residues 61-99 adopt a coiled-coil conformation; it reads AQLHLALERNSWLQKRIEDLEEERDFLRCQLDKFISSAR. Residues 102 to 119 are compositionally biased toward basic and acidic residues; it reads ADDHCRGKPGPRRAEGDG. A disordered region spans residues 102-174; that stretch reads ADDHCRGKPG…KPKARERQRV (73 aa). Residue Ser128 is modified to Phosphoserine. Residues 131–144 show a composition bias toward low complexity; that stretch reads ESAASSLSGASEEG. Residues 150-166 show a composition bias toward basic residues; sequence KRQKQKGGPGRRRFGKP. A Bipartite nuclear localization signal motif is present at residues 151–164; the sequence is RQKQKGGPGRRRFG.

In terms of assembly, interacts with p53/TP53.

The protein resides in the nucleus. Functionally, promotes the degradation of p53/TP53 protein and inhibits its transactivity. The chain is Coiled-coil domain-containing protein 106 (CCDC106) from Bos taurus (Bovine).